We begin with the raw amino-acid sequence, 636 residues long: Plasma kallikrein (636 aa).

A signal peptide spans 1–19 (MIALRQAAYFICLFATVSC). 4 consecutive Apple domains span residues 21-104 (CLTQ…LKRC), 111-194 (CHRS…LKAC), 201-284 (CRVD…LLTC), and 294-377 (CHSK…LRLC). Cystine bridges form between Cys21–Cys104, Cys47–Cys77, Cys51–Cys57, Cys111–Cys194, Cys137–Cys166, Cys141–Cys147, Cys201–Cys284, Cys227–Cys256, Cys231–Cys237, Cys294–Cys377, Cys320–Cys349, and Cys324–Cys330. Asn66 and Asn127 each carry an N-linked (GlcNAc...) asparagine glycan. 2 N-linked (GlcNAc...) asparagine glycosylation sites follow: Asn361 and Asn397. Residues 392–627 (IVGGTNASWG…YVDWILEKTQ (236 aa)) enclose the Peptidase S1 domain. Cys420 and Cys436 form a disulfide bridge. His435 (charge relay system) is an active-site residue. N-linked (GlcNAc...) asparagine glycosylation is present at Asn454. Asp484 acts as the Charge relay system in catalysis. Asn495 carries N-linked (GlcNAc...) asparagine glycosylation. Disulfide bonds link Cys518–Cys585, Cys549–Cys564, and Cys575–Cys603. The active-site Charge relay system is the Ser579.

It belongs to the peptidase S1 family. Plasma kallikrein subfamily. Forms a heterodimer with SERPINA5. The zymogen is activated by factor XIIa, which cleaves the molecule into a light chain, which contains the active site, and a heavy chain, which associates with HMW kininogen. These chains are linked by one or more disulfide bonds.

It localises to the secreted. The enzyme catalyses Cleaves selectively Arg-|-Xaa and Lys-|-Xaa bonds, including Lys-|-Arg and Arg-|-Ser bonds in (human) kininogen to release bradykinin.. Its activity is regulated as follows. Inhibited by SERPINA5. In terms of biological role, the enzyme cleaves Lys-Arg and Arg-Ser bonds. It activates, in a reciprocal reaction, factor XII after its binding to a negatively charged surface. It also releases bradykinin from HMW kininogen and may also play a role in the renin-angiotensin system by converting prorenin into renin. This is Plasma kallikrein (KLKB1) from Bos taurus (Bovine).